Consider the following 648-residue polypeptide: MADDTGTDNEGTGCSGWFLVEAIVDKTTGEQVSDDEDETVEDSGLDMVDFIDDRPITHNSLEAQALLNEQEADAHYAAVQDLKRKYLGSPYVSPLGHIEQSVDCDISPRLDAIQLSRKPKKVKRRLFQSREITDSGYGYSEVETATQVERYGEPENGCGGGGDGREKEGEGQVHTEVHTESEIEQHTGTTRVLELLKCKDVRATLHGKFKECYGLSFKDLTREFKSDKTTCGDWVVAGFGVHHSVSEAFQKLIQPLSTYSHIQWLTNYKCMGMVLLVLLRFKVNKNRCTVARTLATLLNIPEDHMLIEPPKIQSSVAALYWFRTSISNASIVTGDTPEWIARQTIVEHGLADNQFKLTEMVQWAYDNDYCDESDIAFEYAQRADFDSNAKAFLNSNCQAKYVKDCATMCKHYKNAEMKKMSIKQWIKYRSNKIDETGNWKPIVQFLRHQGIEFISFLSKLKLWLHGTPKKNCIAIVGPPDTGKSAFCMSLIKFLGGTVISYVNSSSHFWLQPLCNAKVALLDDATQSCWGYMDTYMRNLLDGNPMSIDRKHKSLALIKCPPLLVTSNIDITTEERYKYLYSRVTLFKFPNPFPFDSNGNAVYELCDANWKCFFARLSASLDIQDSEDEDDGDTSQAFRCVPGTVVRTV.

A Nuclear localization signal motif is present at residues K83 to K85. A phosphoserine; by host mark is found at S89, S93, and S107. Residues I106–L115 carry the Nuclear export signal motif. The segment at Y151–H186 is disordered. The span at D163 to Q185 shows a compositional bias: basic and acidic residues. The interval E184–D352 is DNA-binding region. The SF3 helicase domain occupies I451–V601. G477–S484 is a binding site for ATP. Residue K558 forms a Glycyl lysine isopeptide (Lys-Gly) (interchain with G-Cter in SUMO) linkage.

It belongs to the papillomaviridae E1 protein family. As to quaternary structure, can form hexamers. Interacts with E2 protein; this interaction increases E1 DNA binding specificity. Interacts with host DNA polymerase subunit POLA2. Interacts with host single stranded DNA-binding protein RPA1. Interacts with host TOP1; this interaction stimulates the enzymatic activity of TOP1. In terms of processing, phosphorylated. Post-translationally, sumoylated.

Its subcellular location is the host nucleus. The catalysed reaction is Couples ATP hydrolysis with the unwinding of duplex DNA by translocating in the 3'-5' direction.. It carries out the reaction ATP + H2O = ADP + phosphate + H(+). ATP-dependent DNA 3'-5' helicase required for initiation of viral DNA replication. It forms a complex with the viral E2 protein. The E1-E2 complex binds to the replication origin which contains binding sites for both proteins. During the initial step, a dimer of E1 interacts with a dimer of protein E2 leading to a complex that binds the viral origin of replication with high specificity. Then, a second dimer of E1 displaces the E2 dimer in an ATP-dependent manner to form the E1 tetramer. Following this, two E1 monomers are added to each half of the site, which results in the formation of two E1 trimers on the viral ori. Subsequently, two hexamers will be created. The double hexamer acts as a bi-directional helicase machinery and unwinds the viral DNA and then recruits the host DNA polymerase to start replication. This Pygmy chimpanzee papillomavirus type 1C (PCPV-1C) protein is Replication protein E1.